Consider the following 151-residue polypeptide: 3-hydroxyacyl-[acyl-carrier-protein] dehydratase FabZ (151 aa).

Residue H49 is part of the active site.

Belongs to the thioester dehydratase family. FabZ subfamily.

It localises to the cytoplasm. The catalysed reaction is a (3R)-hydroxyacyl-[ACP] = a (2E)-enoyl-[ACP] + H2O. Its function is as follows. Involved in unsaturated fatty acids biosynthesis. Catalyzes the dehydration of short chain beta-hydroxyacyl-ACPs and long chain saturated and unsaturated beta-hydroxyacyl-ACPs. This chain is 3-hydroxyacyl-[acyl-carrier-protein] dehydratase FabZ, found in Bordetella petrii (strain ATCC BAA-461 / DSM 12804 / CCUG 43448).